The following is a 459-amino-acid chain: uncharacterized protein (459 aa).

2 helical membrane passes run 53–75 and 111–133; these read IPLLPVLALSVGALTVLGQGLTL and ARIARVLLLVAGVFTLVIVCLCA. Residues 174 to 196 form a disordered region; it reads HLDNPSAPHPSENPQSRAHPKQN.

Its subcellular location is the cell membrane. This is an uncharacterized protein from Treponema pallidum (strain Nichols).